The sequence spans 20 residues: Short cationic peptide-4d (20 aa).

Residue Glu20 is modified to Glutamic acid 1-amide.

In terms of tissue distribution, expressed by the venom gland.

It is found in the secreted. This chain is Short cationic peptide-4d, found in Cupiennius salei (American wandering spider).